Reading from the N-terminus, the 160-residue chain is Phosphopantetheine adenylyltransferase (160 aa).

A substrate-binding site is contributed by serine 9. Residues 9–10 (SF) and histidine 17 each bind ATP. Residues lysine 41, valine 73, and lysine 87 each coordinate substrate. Residues 88–90 (GLR), glutamate 98, and 122–128 (YSFVSSS) each bind ATP.

The protein belongs to the bacterial CoaD family. In terms of assembly, homohexamer. Mg(2+) is required as a cofactor.

The protein localises to the cytoplasm. The catalysed reaction is (R)-4'-phosphopantetheine + ATP + H(+) = 3'-dephospho-CoA + diphosphate. Its pathway is cofactor biosynthesis; coenzyme A biosynthesis; CoA from (R)-pantothenate: step 4/5. Functionally, reversibly transfers an adenylyl group from ATP to 4'-phosphopantetheine, yielding dephospho-CoA (dPCoA) and pyrophosphate. In Mycobacterium avium (strain 104), this protein is Phosphopantetheine adenylyltransferase.